Reading from the N-terminus, the 244-residue chain is Transcriptional regulatory protein AruR (244 aa).

One can recognise a Response regulatory domain in the interval 6–124; sequence RVLVVDDDPV…ELVSRAKNLI (119 aa). A 4-aspartylphosphate modification is found at Asp-60. The ompR/PhoB-type DNA-binding region spans 139–239; that stretch reads QALRQFGDWL…IHGAGYLFTA (101 aa).

Phosphorylated by AruS.

It localises to the cytoplasm. Its pathway is amino-acid degradation; L-arginine degradation [regulation]. In terms of biological role, member of the two-component regulatory system AruS/AruR, which is involved in the regulation of the arginine transaminase (ATA) pathway in response to exogeneous L-arginine. Regulates transcription of aruH and aruI. In Pseudomonas aeruginosa (strain ATCC 15692 / DSM 22644 / CIP 104116 / JCM 14847 / LMG 12228 / 1C / PRS 101 / PAO1), this protein is Transcriptional regulatory protein AruR (aruR).